A 564-amino-acid chain; its full sequence is Dihydroxy-acid dehydratase (564 aa).

D80 contributes to the Mg(2+) binding site. C121 serves as a coordination point for [2Fe-2S] cluster. 2 residues coordinate Mg(2+): D122 and K123. N6-carboxylysine is present on K123. C194 lines the [2Fe-2S] cluster pocket. E447 contacts Mg(2+). S473 functions as the Proton acceptor in the catalytic mechanism.

This sequence belongs to the IlvD/Edd family. As to quaternary structure, homodimer. Requires [2Fe-2S] cluster as cofactor. The cofactor is Mg(2+).

The enzyme catalyses (2R)-2,3-dihydroxy-3-methylbutanoate = 3-methyl-2-oxobutanoate + H2O. The catalysed reaction is (2R,3R)-2,3-dihydroxy-3-methylpentanoate = (S)-3-methyl-2-oxopentanoate + H2O. Its pathway is amino-acid biosynthesis; L-isoleucine biosynthesis; L-isoleucine from 2-oxobutanoate: step 3/4. It functions in the pathway amino-acid biosynthesis; L-valine biosynthesis; L-valine from pyruvate: step 3/4. In terms of biological role, functions in the biosynthesis of branched-chain amino acids. Catalyzes the dehydration of (2R,3R)-2,3-dihydroxy-3-methylpentanoate (2,3-dihydroxy-3-methylvalerate) into 2-oxo-3-methylpentanoate (2-oxo-3-methylvalerate) and of (2R)-2,3-dihydroxy-3-methylbutanoate (2,3-dihydroxyisovalerate) into 2-oxo-3-methylbutanoate (2-oxoisovalerate), the penultimate precursor to L-isoleucine and L-valine, respectively. The polypeptide is Dihydroxy-acid dehydratase (Listeria monocytogenes serotype 4a (strain HCC23)).